The following is a 259-amino-acid chain: 5'-nucleotidase SurE (259 aa).

Positions 8, 9, 41, and 99 each coordinate a divalent metal cation.

Belongs to the SurE nucleotidase family. Requires a divalent metal cation as cofactor.

Its subcellular location is the cytoplasm. The catalysed reaction is a ribonucleoside 5'-phosphate + H2O = a ribonucleoside + phosphate. In terms of biological role, nucleotidase that shows phosphatase activity on nucleoside 5'-monophosphates. The sequence is that of 5'-nucleotidase SurE from Synechococcus sp. (strain JA-3-3Ab) (Cyanobacteria bacterium Yellowstone A-Prime).